A 336-amino-acid chain; its full sequence is Transcription initiation factor IIB (336 aa).

The segment at 41-72 adopts a TFIIB-type zinc-finger fold; the sequence is QKLRCPICGNTVFIEDAERGQIVCASCGYVLM. Residues Cys-45, Cys-48, Cys-64, and Cys-67 each contribute to the Zn(2+) site. Repeat copies occupy residues 152 to 235 and 246 to 327.

It belongs to the TFIIB family.

Stabilizes TBP binding to an archaeal box-A promoter. Also responsible for recruiting RNA polymerase II to the pre-initiation complex (DNA-TBP-TFIIB). The polypeptide is Transcription initiation factor IIB (Caldivirga maquilingensis (strain ATCC 700844 / DSM 13496 / JCM 10307 / IC-167)).